We begin with the raw amino-acid sequence, 336 residues long: Ornithine carbamoyltransferase, catabolic (336 aa).

Carbamoyl phosphate-binding positions include 57-60 (STRT), glutamine 84, arginine 108, and 136-139 (HPTQ). Residues asparagine 169, aspartate 233, and 237–238 (SM) each bind L-ornithine. Carbamoyl phosphate is bound by residues 275–276 (CL) and arginine 322.

The protein belongs to the aspartate/ornithine carbamoyltransferase superfamily. OTCase family.

It localises to the cytoplasm. The enzyme catalyses carbamoyl phosphate + L-ornithine = L-citrulline + phosphate + H(+). It participates in amino-acid degradation; L-arginine degradation via ADI pathway; carbamoyl phosphate from L-arginine: step 2/2. In terms of biological role, reversibly catalyzes the transfer of the carbamoyl group from carbamoyl phosphate (CP) to the N(epsilon) atom of ornithine (ORN) to produce L-citrulline. The sequence is that of Ornithine carbamoyltransferase, catabolic from Chromobacterium violaceum (strain ATCC 12472 / DSM 30191 / JCM 1249 / CCUG 213 / NBRC 12614 / NCIMB 9131 / NCTC 9757 / MK).